The primary structure comprises 526 residues: Glucomannan 4-beta-mannosyltransferase 1 (526 aa).

A helical membrane pass occupies residues 31–51 (VIIPLLKLAVIVCSVMSIMLF). Asp-130 is a catalytic residue. Residues Asp-189 and Asp-191 each contribute to the substrate site. Asp-283 is an active-site residue. The next 4 helical transmembrane spans lie at 362–382 (IVAH…CVIV), 399–419 (ITIL…LWIL), 477–497 (PLEI…LLFG), and 501–521 (FFVY…GLVG).

Belongs to the glycosyltransferase 2 family. Plant cellulose synthase-like A subfamily.

The protein localises to the golgi apparatus membrane. The catalysed reaction is GDP-mannose + (glucomannan)n = GDP + (glucomannan)n+1.. In terms of biological role, possesses 4-beta-mannosyltransferase activity on mannan using GDP-mannose. The beta-1,4-mannan product is the backbone for galactomannan synthesis by galactomannan galactosyltransferase. The galactomannan is a hemicellulosic storage polysaccharide accumulated in the form of secondary wall thickenings in the seed endosperm. The chain is Glucomannan 4-beta-mannosyltransferase 1 from Cyamopsis tetragonoloba (Guar).